Here is a 582-residue protein sequence, read N- to C-terminus: Fructose-1,6-bisphosphatase class 3 (582 aa).

It belongs to the FBPase class 3 family. Requires Mn(2+) as cofactor.

The enzyme catalyses beta-D-fructose 1,6-bisphosphate + H2O = beta-D-fructose 6-phosphate + phosphate. It functions in the pathway carbohydrate biosynthesis; gluconeogenesis. The polypeptide is Fructose-1,6-bisphosphatase class 3 (Saccharophagus degradans (strain 2-40 / ATCC 43961 / DSM 17024)).